A 196-amino-acid chain; its full sequence is Probable molybdenum cofactor guanylyltransferase (196 aa).

GTP-binding positions include leucine 7–glycine 9, lysine 19, aspartate 68, and aspartate 93. Aspartate 93 is a binding site for Mg(2+).

This sequence belongs to the MobA family. Mg(2+) serves as cofactor.

The protein resides in the cytoplasm. It catalyses the reaction Mo-molybdopterin + GTP + H(+) = Mo-molybdopterin guanine dinucleotide + diphosphate. Functionally, transfers a GMP moiety from GTP to Mo-molybdopterin (Mo-MPT) cofactor (Moco or molybdenum cofactor) to form Mo-molybdopterin guanine dinucleotide (Mo-MGD) cofactor. In Pyrococcus furiosus (strain ATCC 43587 / DSM 3638 / JCM 8422 / Vc1), this protein is Probable molybdenum cofactor guanylyltransferase.